We begin with the raw amino-acid sequence, 452 residues long: Trigger factor (452 aa).

One can recognise a PPIase FKBP-type domain in the interval 170-256 (NSIVKVDFVE…IKSIKKRDLP (87 aa)).

It belongs to the FKBP-type PPIase family. Tig subfamily.

Its subcellular location is the cytoplasm. It carries out the reaction [protein]-peptidylproline (omega=180) = [protein]-peptidylproline (omega=0). Its function is as follows. Involved in protein export. Acts as a chaperone by maintaining the newly synthesized protein in an open conformation. Functions as a peptidyl-prolyl cis-trans isomerase. This is Trigger factor from Borrelia garinii subsp. bavariensis (strain ATCC BAA-2496 / DSM 23469 / PBi) (Borreliella bavariensis).